Reading from the N-terminus, the 221-residue chain is MSSPISGFLRFVAVLLAVVSPLVYLAEQRLESFYVFDHKHLHELSTQAIAQHGNNTRAIVGHIVDELRARPETTKYISVQEEWVFNNAGGAMGGMYIIHASVTEYLIIFGTAIGTEGHTGRHTADDYFNILTGEQWAYVPGEYEPEVYPAGSVHHLRRGTVKQYKMPEGCFALEYARGWIPPMLFFGFADGLSSTLDFPTLWQTTVVTGREMLGNLMLGKF.

The chain crosses the membrane as a helical span at residues 5–25; that stretch reads ISGFLRFVAVLLAVVSPLVYL.

It belongs to the ERG2 family.

The protein resides in the endoplasmic reticulum membrane. It functions in the pathway steroid metabolism; ergosterol biosynthesis; ergosterol from zymosterol: step 2/5. In terms of biological role, catalyzes the reaction which results in unsaturation at C-7 in the B ring of sterols. In Pyricularia oryzae (strain 70-15 / ATCC MYA-4617 / FGSC 8958) (Rice blast fungus), this protein is C-8 sterol isomerase (ERG2).